The chain runs to 502 residues: Protein GIS3 (502 aa).

The protein resides in the cytoplasm. Its subcellular location is the nucleus. This is Protein GIS3 (GIS3) from Saccharomyces cerevisiae (strain ATCC 204508 / S288c) (Baker's yeast).